The sequence spans 251 residues: tRNA (guanine-N(1)-)-methyltransferase (251 aa).

S-adenosyl-L-methionine is bound by residues Gly-117 and 137-142 (IGDYVL).

It belongs to the RNA methyltransferase TrmD family. In terms of assembly, homodimer.

The protein resides in the cytoplasm. The enzyme catalyses guanosine(37) in tRNA + S-adenosyl-L-methionine = N(1)-methylguanosine(37) in tRNA + S-adenosyl-L-homocysteine + H(+). Specifically methylates guanosine-37 in various tRNAs. The sequence is that of tRNA (guanine-N(1)-)-methyltransferase from Actinobacillus pleuropneumoniae serotype 5b (strain L20).